We begin with the raw amino-acid sequence, 122 residues long: Large ribosomal subunit protein uL18 (122 aa).

Belongs to the universal ribosomal protein uL18 family. In terms of assembly, part of the 50S ribosomal subunit; part of the 5S rRNA/L5/L18/L25 subcomplex. Contacts the 5S and 23S rRNAs.

In terms of biological role, this is one of the proteins that bind and probably mediate the attachment of the 5S RNA into the large ribosomal subunit, where it forms part of the central protuberance. The sequence is that of Large ribosomal subunit protein uL18 from Desulfitobacterium hafniense (strain DSM 10664 / DCB-2).